A 201-amino-acid polypeptide reads, in one-letter code: Protein FAR-RED-ELONGATED HYPOCOTYL 1-LIKE (201 aa).

The short motif at 32–35 is the Nuclear localization sequence (NLS) element; it reads KKRK. The Nuclear export sequence (NES) motif lies at 43 to 46; sequence LLPL.

Belongs to the FHY1 protein family. In terms of assembly, homodimer and heterodimer with FHY1. Interacts with PHYA, especially upon far-red (FR) light illumination. Binds to LAF1 and HFR1. In terms of processing, inactivated by rapid reversible PHYA-mediated phosphorylation.

It is found in the nucleus. The protein resides in the cytoplasm. Its function is as follows. Can activate transcription. Essential for light-regulated PHYA nuclear accumulation and subsequent PHYA phototropic signaling processes. PHYA-specific signal transducer in response to continuous FR lights. Mediates the association of PHYA with HFR1 and LAF1 in the nucleus in response to FR conditions. Contributes to inhibition of hypocotyl elongation in continuous blue light (B). The protein is Protein FAR-RED-ELONGATED HYPOCOTYL 1-LIKE of Arabidopsis thaliana (Mouse-ear cress).